Consider the following 424-residue polypeptide: Na(+)/H(+) antiporter NhaA (424 aa).

A run of 11 helical transmembrane segments spans residues 23-43 (ILLI…LATL), 65-85 (VHLW…GLEI), 102-122 (LPFI…MFFV), 131-151 (GWAI…ALLG), 160-180 (LFLV…IALF), 183-203 (AKIN…MFAC), 211-231 (LLVY…SGVH), 265-285 (ALHP…NAGV), 303-323 (IAAG…WLAV), 341-361 (AVSM…SLAF), and 373-393 (IGIL…LRLA).

This sequence belongs to the NhaA Na(+)/H(+) (TC 2.A.33) antiporter family.

It localises to the cell inner membrane. The catalysed reaction is Na(+)(in) + 2 H(+)(out) = Na(+)(out) + 2 H(+)(in). Na(+)/H(+) antiporter that extrudes sodium in exchange for external protons. The sequence is that of Na(+)/H(+) antiporter NhaA from Sphingopyxis alaskensis (strain DSM 13593 / LMG 18877 / RB2256) (Sphingomonas alaskensis).